Reading from the N-terminus, the 201-residue chain is Regulator of G-protein signaling 16 (201 aa).

2 S-palmitoyl cysteine lipidation sites follow: Cys-2 and Cys-12. An RGS domain is found at 64-180 (SFDLLLNSKN…LKSPAYRDLA (117 aa)). Tyr-167 carries the post-translational modification Phosphotyrosine; by EGFR. Tyr-176 carries the phosphotyrosine modification. The segment at 181-201 (AQASATSTSAPSGSPAEPSHT) is disordered.

In terms of assembly, interacts with GNAI1 and GNAQ. Interacts with GNAI3, GNAI3 and GNAO1. Palmitoylated on Cys-2 and/or Cys-12. In terms of processing, phosphorylated. Phosphorylation at Tyr-167 by EGFR enhances GTPase accelerating (GAP) activity toward GNAI1. As to expression, retinal; also predominantly expressed in the liver and pituitary.

It localises to the membrane. Functionally, regulates G protein-coupled receptor signaling cascades. Inhibits signal transduction by increasing the GTPase activity of G protein alpha subunits, thereby driving them into their inactive GDP-bound form. Plays an important role in the phototransduction cascade by regulating the lifetime and effective concentration of activated transducin alpha. May regulate extra and intracellular mitogenic signals. The protein is Regulator of G-protein signaling 16 (Rgs16) of Mus musculus (Mouse).